Here is a 282-residue protein sequence, read N- to C-terminus: Proteasome subunit beta (282 aa).

The propeptide at 1 to 55 is removed in mature form; by autocatalysis; that stretch reads MDNSSTGRYPAASLPPAYLRPGSSSFTDFLRAQAPELLPTARSFPEGSVVQAAHG. Catalysis depends on Thr56, which acts as the Nucleophile.

The protein belongs to the peptidase T1B family. As to quaternary structure, the 20S proteasome core is composed of 14 alpha and 14 beta subunits that assemble into four stacked heptameric rings, resulting in a barrel-shaped structure. The two inner rings, each composed of seven catalytic beta subunits, are sandwiched by two outer rings, each composed of seven alpha subunits. The catalytic chamber with the active sites is on the inside of the barrel. Has a gated structure, the ends of the cylinder being occluded by the N-termini of the alpha-subunits. Is capped by the proteasome-associated ATPase, ARC.

It is found in the cytoplasm. The catalysed reaction is Cleavage of peptide bonds with very broad specificity.. Its pathway is protein degradation; proteasomal Pup-dependent pathway. Its activity is regulated as follows. The formation of the proteasomal ATPase ARC-20S proteasome complex, likely via the docking of the C-termini of ARC into the intersubunit pockets in the alpha-rings, may trigger opening of the gate for substrate entry. Interconversion between the open-gate and close-gate conformations leads to a dynamic regulation of the 20S proteasome proteolysis activity. Its function is as follows. Component of the proteasome core, a large protease complex with broad specificity involved in protein degradation. The protein is Proteasome subunit beta of Actinosynnema mirum (strain ATCC 29888 / DSM 43827 / JCM 3225 / NBRC 14064 / NCIMB 13271 / NRRL B-12336 / IMRU 3971 / 101).